Here is a 308-residue protein sequence, read N- to C-terminus: D-alanine--D-alanine ligase (308 aa).

The 201-residue stretch at 102–302 folds into the ATP-grasp domain; sequence KHVAKAAGIP…FGEFLRWMVE (201 aa). Residue 128–183 coordinates ATP; the sequence is PMKPPYVVKPVREGSSFGVVIVKEDQSHPPQVITSSEWRYGDRVMVERYIAGREFT. Residues Asp252, Glu269, and Asn271 each coordinate Mg(2+).

The protein belongs to the D-alanine--D-alanine ligase family. It depends on Mg(2+) as a cofactor. Requires Mn(2+) as cofactor.

Its subcellular location is the cytoplasm. It catalyses the reaction 2 D-alanine + ATP = D-alanyl-D-alanine + ADP + phosphate + H(+). It functions in the pathway cell wall biogenesis; peptidoglycan biosynthesis. Cell wall formation. This chain is D-alanine--D-alanine ligase, found in Rhizobium meliloti (strain 1021) (Ensifer meliloti).